The primary structure comprises 219 residues: Uracil-DNA glycosylase (219 aa).

The active-site Proton acceptor is Asp-61.

The protein belongs to the uracil-DNA glycosylase (UDG) superfamily. UNG family.

It is found in the cytoplasm. The catalysed reaction is Hydrolyzes single-stranded DNA or mismatched double-stranded DNA and polynucleotides, releasing free uracil.. Functionally, excises uracil residues from the DNA which can arise as a result of misincorporation of dUMP residues by DNA polymerase or due to deamination of cytosine. The chain is Uracil-DNA glycosylase from Exiguobacterium sibiricum (strain DSM 17290 / CCUG 55495 / CIP 109462 / JCM 13490 / 255-15).